The primary structure comprises 236 residues: UPF0257 lipoprotein YnfC (236 aa).

Residues 1-16 (MKKPLLLTLLCMILAG) form the signal peptide. The N-palmitoyl cysteine moiety is linked to residue C17. Residue C17 is the site of S-diacylglycerol cysteine attachment.

This sequence belongs to the UPF0257 family.

The protein localises to the cell membrane. In Salmonella paratyphi C (strain RKS4594), this protein is UPF0257 lipoprotein YnfC.